The primary structure comprises 333 residues: Fructose-1,6-bisphosphatase class 1 (333 aa).

Positions 92, 113, 115, and 116 each coordinate Mg(2+). Substrate contacts are provided by residues 116–119, asparagine 209, tyrosine 242, and lysine 272; that span reads DGSS. Glutamate 278 lines the Mg(2+) pocket.

It belongs to the FBPase class 1 family. As to quaternary structure, homotetramer. The cofactor is Mg(2+).

The protein localises to the cytoplasm. The enzyme catalyses beta-D-fructose 1,6-bisphosphate + H2O = beta-D-fructose 6-phosphate + phosphate. It participates in carbohydrate biosynthesis; Calvin cycle. The protein is Fructose-1,6-bisphosphatase class 1 of Chlorobium chlorochromatii (strain CaD3).